A 435-amino-acid chain; its full sequence is MNQIRQAPAASASNATESKQEIRNYTMNFGPQHPAAHGVLRLILEMDGETVVRADPHIGLLHRGTEKLAESKPFNQSIGYMDRLDYVSMMCNEHAYVRAIETLIGIQAPERAQYIRTMFDEITRILNHLMWLGSNALDLGAMAVMLYAFREREELMDVYEAISGARMHAAYYRPGGVYRDLPDTMPKYKQSRWHKGKALKRLNAAREGSMLDFLEHFTDTFPQRIDEYETLLTDNRIWKQRTVGVGVIEPDVAKAWGMTGVMLRGSGIAWDLRKKQPYAKYDAVDFDIPLGTCGDCYDRYLCRVAEMRESNRIIKQCVQWLKVNPGQVMVENFKVAPPKRESMKDDMEALIHHFKLFSEGYCVPAGETYSAVEAPKGEFGCYLISDGANKPFRVHLRAPGFAHLSSMDAVVRGYMLADVVAMIGTYDLVFGEVDR.

This sequence belongs to the complex I 49 kDa subunit family. NDH-1 is composed of 14 different subunits. Subunits NuoB, C, D, E, F, and G constitute the peripheral sector of the complex.

The protein resides in the cell inner membrane. The catalysed reaction is a quinone + NADH + 5 H(+)(in) = a quinol + NAD(+) + 4 H(+)(out). Functionally, NDH-1 shuttles electrons from NADH, via FMN and iron-sulfur (Fe-S) centers, to quinones in the respiratory chain. The immediate electron acceptor for the enzyme in this species is believed to be ubiquinone. Couples the redox reaction to proton translocation (for every two electrons transferred, four hydrogen ions are translocated across the cytoplasmic membrane), and thus conserves the redox energy in a proton gradient. The sequence is that of NADH-quinone oxidoreductase subunit D from Xylella fastidiosa (strain M12).